The sequence spans 227 residues: PKHD-type hydroxylase BamMC406_5004 (227 aa).

The Fe2OG dioxygenase domain maps to Gln80 to Ser179. Fe cation is bound by residues His98, Asp100, and His160. Arg170 is a 2-oxoglutarate binding site.

It depends on Fe(2+) as a cofactor. Requires L-ascorbate as cofactor.

The protein is PKHD-type hydroxylase BamMC406_5004 of Burkholderia ambifaria (strain MC40-6).